Consider the following 442-residue polypeptide: Chromosomal replication initiator protein DnaA (442 aa).

The tract at residues 1–75 (MDAWPRCLER…GNGEVALAVG (75 aa)) is domain I, interacts with DnaA modulators. Positions 75–104 (GSRPRAPEPAPAPVAATIAPQAAPIAPFAG) are domain II. The tract at residues 105–322 (NLDSHYTFAN…GALNTLVARA (218 aa)) is domain III, AAA+ region. Gly150, Gly152, Lys153, and Thr154 together coordinate ATP. The segment at 323–442 (NFTGRSITVE…WEKLIRKLSE (120 aa)) is domain IV, binds dsDNA.

The protein belongs to the DnaA family. In terms of assembly, oligomerizes as a right-handed, spiral filament on DNA at oriC.

It localises to the cytoplasm. In terms of biological role, plays an essential role in the initiation and regulation of chromosomal replication. ATP-DnaA binds to the origin of replication (oriC) to initiate formation of the DNA replication initiation complex once per cell cycle. Binds the DnaA box (a 9 base pair repeat at the origin) and separates the double-stranded (ds)DNA. Forms a right-handed helical filament on oriC DNA; dsDNA binds to the exterior of the filament while single-stranded (ss)DNA is stabiized in the filament's interior. The ATP-DnaA-oriC complex binds and stabilizes one strand of the AT-rich DNA unwinding element (DUE), permitting loading of DNA polymerase. After initiation quickly degrades to an ADP-DnaA complex that is not apt for DNA replication. Binds acidic phospholipids. In Xanthomonas oryzae pv. oryzae (strain PXO99A), this protein is Chromosomal replication initiator protein DnaA.